Here is a 257-residue protein sequence, read N- to C-terminus: Urease accessory protein UreD (257 aa).

The protein belongs to the UreD family. As to quaternary structure, ureD, UreF and UreG form a complex that acts as a GTP-hydrolysis-dependent molecular chaperone, activating the urease apoprotein by helping to assemble the nickel containing metallocenter of UreC. The UreE protein probably delivers the nickel.

It localises to the cytoplasm. Required for maturation of urease via the functional incorporation of the urease nickel metallocenter. The sequence is that of Urease accessory protein UreD from Sporosarcina pasteurii (Bacillus pasteurii).